We begin with the raw amino-acid sequence, 221 residues long: Probable septum site-determining protein MinC (221 aa).

It belongs to the MinC family. As to quaternary structure, interacts with MinD and FtsZ.

Functionally, cell division inhibitor that blocks the formation of polar Z ring septums. Rapidly oscillates between the poles of the cell to destabilize FtsZ filaments that have formed before they mature into polar Z rings. Prevents FtsZ polymerization. The polypeptide is Probable septum site-determining protein MinC (Shewanella loihica (strain ATCC BAA-1088 / PV-4)).